The chain runs to 436 residues: UDP-N-acetylmuramate--L-alanine ligase (436 aa).

108–114 (GAHGKTS) contributes to the ATP binding site.

It belongs to the MurCDEF family.

The protein localises to the cytoplasm. It carries out the reaction UDP-N-acetyl-alpha-D-muramate + L-alanine + ATP = UDP-N-acetyl-alpha-D-muramoyl-L-alanine + ADP + phosphate + H(+). The protein operates within cell wall biogenesis; peptidoglycan biosynthesis. Its function is as follows. Cell wall formation. The polypeptide is UDP-N-acetylmuramate--L-alanine ligase (Bacillus cytotoxicus (strain DSM 22905 / CIP 110041 / 391-98 / NVH 391-98)).